Reading from the N-terminus, the 38-residue chain is Large ribosomal subunit protein bL36B (38 aa).

This sequence belongs to the bacterial ribosomal protein bL36 family.

This chain is Large ribosomal subunit protein bL36B, found in Prochlorococcus marinus (strain MIT 9515).